The sequence spans 224 residues: Urease accessory protein UreF (224 aa).

Belongs to the UreF family. In terms of assembly, ureD, UreF and UreG form a complex that acts as a GTP-hydrolysis-dependent molecular chaperone, activating the urease apoprotein by helping to assemble the nickel containing metallocenter of UreC. The UreE protein probably delivers the nickel.

It localises to the cytoplasm. Required for maturation of urease via the functional incorporation of the urease nickel metallocenter. The polypeptide is Urease accessory protein UreF (Methylorubrum populi (strain ATCC BAA-705 / NCIMB 13946 / BJ001) (Methylobacterium populi)).